A 160-amino-acid chain; its full sequence is MAFTFAAFCYMLTLVLCASLIFFVIWHIIAFDELRTDFKNPIDQGNPARARERLKNIERICCLLRKLVVPEYSIHGLFCLMFLCAAEWVTLGLNIPLLFYHLWRYFHRPADGSEVMYDAVSIMNADILNYCQKESWCKLAFYLLSFFYYLYSMVYTLVSF.

Residues 1–10 (MAFTFAAFCY) lie on the Cytoplasmic side of the membrane. The helical transmembrane segment at 11–31 (MLTLVLCASLIFFVIWHIIAF) threads the bilayer. Residues 32-72 (DELRTDFKNPIDQGNPARARERLKNIERICCLLRKLVVPEY) lie on the Lumenal side of the membrane. A helical transmembrane segment spans residues 73–93 (SIHGLFCLMFLCAAEWVTLGL). Residues 94–138 (NIPLLFYHLWRYFHRPADGSEVMYDAVSIMNADILNYCQKESWCK) lie on the Cytoplasmic side of the membrane. A helical membrane pass occupies residues 139 to 159 (LAFYLLSFFYYLYSMVYTLVS). A topological domain (lumenal) is located at residue Phe160.

This sequence belongs to the cornichon family. Acts as an auxiliary subunit for AMPA-selective glutamate receptors (AMPARs). Found in a complex with GRIA1, GRIA2, GRIA3, GRIA4, CNIH3, CACNG2, CACNG3, CACNG4, CACNG5, CACNG7 and CACNG8. Interacts with CACGN8. Interacts with GRIA1. Found in a complex with GRIA1, GRIA2, GRIA3, GRIA4, DLG4 and CACNG8. As to expression, expression is up-regulated in dorsolateral prefrontal cortex of patients with schizophrenia (postmortem brain study).

It is found in the endoplasmic reticulum membrane. The protein localises to the postsynaptic cell membrane. It localises to the cell projection. Its subcellular location is the dendrite. The protein resides in the dendritic spine. It is found in the postsynaptic density. Its function is as follows. Regulates the trafficking and gating properties of AMPA-selective glutamate receptors (AMPARs). Promotes their targeting to the cell membrane and synapses and modulates their gating properties by regulating their rates of activation, deactivation and desensitization. Blocks CACNG8-mediated resensitization of AMPA receptors. In Homo sapiens (Human), this protein is Protein cornichon homolog 2.